The sequence spans 81 residues: Small cysteine-rich protein 4 (81 aa).

The signal sequence occupies residues 1–23 (MDTKVACLLLIILGALTVQGAVS). Positions 24–25 (GN) are excised as a propeptide.

This sequence belongs to the Cnidaria small cysteine-rich protein (SCRiP) family. beta subfamily. Contains 4 disulfide bonds.

The protein localises to the secreted. It is found in the nematocyst. In terms of biological role, induces neurotoxic symptoms on zebrafish. Has also been claimed to be implied in calcification, but tests on homolog proteins suggest that proteins of this family have a neurotoxic function and not a calcification function. In Orbicella faveolata (Mountainous star coral), this protein is Small cysteine-rich protein 4.